The following is a 1011-amino-acid chain: Probable beta-galactosidase E (1011 aa).

The first 19 residues, 1–19 (MKSLLKRLIALAAAYSVAA), serve as a signal peptide directing secretion. Substrate contacts are provided by Tyr-92, Asn-136, Ala-137, Glu-138, and Asn-195. The active-site Proton donor is the Glu-196. An N-linked (GlcNAc...) asparagine glycan is attached at Asn-202. Tyr-261 is a binding site for substrate. The cysteines at positions 267 and 316 are disulfide-linked. Glu-299 acts as the Nucleophile in catalysis. Residue Tyr-365 coordinates substrate. 12 N-linked (GlcNAc...) asparagine glycosylation sites follow: Asn-406, Asn-423, Asn-446, Asn-455, Asn-588, Asn-622, Asn-704, Asn-745, Asn-759, Asn-772, Asn-778, and Asn-913.

It belongs to the glycosyl hydrolase 35 family.

It is found in the secreted. The enzyme catalyses Hydrolysis of terminal non-reducing beta-D-galactose residues in beta-D-galactosides.. Functionally, cleaves beta-linked terminal galactosyl residues from gangliosides, glycoproteins, and glycosaminoglycans. The protein is Probable beta-galactosidase E (lacE) of Aspergillus fumigatus (strain CBS 144.89 / FGSC A1163 / CEA10) (Neosartorya fumigata).